Reading from the N-terminus, the 595-residue chain is Sorting nexin-9 (595 aa).

One can recognise an SH3 domain in the interval 1–62; that stretch reads MATKARVMYD…PTDYVEILPN (62 aa). Positions 89 to 100 are enriched in low complexity; the sequence is QTNSSSANSNNQ. The segment at 89 to 199 is disordered; it reads QTNSSSANSN…QRGNSRAGAS (111 aa). Ser121 is subject to Phosphoserine. Residues 129-144 are compositionally biased toward polar residues; it reads TDGTSAQRNSSANNWD. A compositionally biased stretch (acidic residues) spans 159–169; the sequence is GDDDEWDEDWD. Ser200 is modified (phosphoserine). The critical for tubulation activity stretch occupies residues 201-213; sequence MKLPLNKFPGFAK. Tyr239 is modified (phosphotyrosine). A PX domain is found at 250–360; that stretch reads FDCVVADPRK…QQFLNFRDEK (111 aa). Residues Arg286, Lys288, and Arg327 each contribute to the a 1,2-diacyl-sn-glycero-3-phospho-(1D-myo-inositol-4,5-bisphosphate) site. Residue Lys288 is modified to N6-acetyllysine. The region spanning 392 to 595 is the BAR domain; the sequence is LIEIEQKCDA…RQALSRFPVM (204 aa).

It belongs to the sorting nexin family. Homodimer, and homooligomer. Heterodimer with SNX18. Interacts with ITCH. Interacts (via SH3 domain) with TNK2, WASL and ACTR3. Identified in a complex with TNK2 and clathrin heavy chains. Identified in a complex with the AP-2 complex, clathrin and DNM2. Interacts (via SH3 domain) with DNM1 and DNM2. Identified in an oligomeric complex containing DNM1 and SNX9. Interacts with FCHSD1. Interacts with ADAM9 and ADAM15 cytoplasmic tails. In terms of processing, phosphorylated on tyrosine residues by TNK2. Phosphorylation promotes its activity in the degradation of EGFR. Post-translationally, ubiquitinated by ITCH. In terms of tissue distribution, detected in inner ear vestibula and in the cuticular plate of cochlear hair cells (at protein level).

It is found in the cytoplasmic vesicle membrane. It localises to the cell membrane. Its subcellular location is the cytoplasmic vesicle. The protein localises to the clathrin-coated vesicle. The protein resides in the golgi apparatus. It is found in the trans-Golgi network. It localises to the cell projection. Its subcellular location is the ruffle. The protein localises to the cytoplasm. Functionally, involved in endocytosis and intracellular vesicle trafficking, both during interphase and at the end of mitosis. Required for efficient progress through mitosis and cytokinesis. Required for normal formation of the cleavage furrow at the end of mitosis. Plays a role in endocytosis via clathrin-coated pits, but also clathrin-independent, actin-dependent fluid-phase endocytosis. Plays a role in macropinocytosis. Promotes internalization of TNFR. Promotes degradation of EGFR after EGF signaling. Stimulates the GTPase activity of DNM1. Promotes DNM1 oligomerization. Promotes activation of the Arp2/3 complex by WASL, and thereby plays a role in the reorganization of the F-actin cytoskeleton. Binds to membranes enriched in phosphatidylinositol 4,5-bisphosphate and promotes membrane tubulation. Has lower affinity for membranes enriched in phosphatidylinositol 3-phosphate. The polypeptide is Sorting nexin-9 (Snx9) (Mus musculus (Mouse)).